Here is a 149-residue protein sequence, read N- to C-terminus: 3-hydroxyacyl-[acyl-carrier-protein] dehydratase FabZ (149 aa).

His-52 is an active-site residue.

It belongs to the thioester dehydratase family. FabZ subfamily.

It is found in the cytoplasm. It catalyses the reaction a (3R)-hydroxyacyl-[ACP] = a (2E)-enoyl-[ACP] + H2O. Functionally, involved in unsaturated fatty acids biosynthesis. Catalyzes the dehydration of short chain beta-hydroxyacyl-ACPs and long chain saturated and unsaturated beta-hydroxyacyl-ACPs. The polypeptide is 3-hydroxyacyl-[acyl-carrier-protein] dehydratase FabZ (Cupriavidus necator (strain ATCC 17699 / DSM 428 / KCTC 22496 / NCIMB 10442 / H16 / Stanier 337) (Ralstonia eutropha)).